Here is a 634-residue protein sequence, read N- to C-terminus: Threonine--tRNA ligase (634 aa).

The 61-residue stretch at 1-61 (MISLKFPNNE…SESGEFRLYT (61 aa)) folds into the TGS domain. Positions 242 to 532 (DHRKIGQELD…LIEHYAGAFP (291 aa)) are catalytic. Cysteine 333, histidine 384, and histidine 509 together coordinate Zn(2+).

The protein belongs to the class-II aminoacyl-tRNA synthetase family. Homodimer. It depends on Zn(2+) as a cofactor.

The protein resides in the cytoplasm. It catalyses the reaction tRNA(Thr) + L-threonine + ATP = L-threonyl-tRNA(Thr) + AMP + diphosphate + H(+). Catalyzes the attachment of threonine to tRNA(Thr) in a two-step reaction: L-threonine is first activated by ATP to form Thr-AMP and then transferred to the acceptor end of tRNA(Thr). Also edits incorrectly charged L-seryl-tRNA(Thr). The sequence is that of Threonine--tRNA ligase from Carboxydothermus hydrogenoformans (strain ATCC BAA-161 / DSM 6008 / Z-2901).